The primary structure comprises 473 residues: Trehalose-6-phosphate synthase (473 aa).

Residue Arg10 participates in D-glucose 6-phosphate binding. UDP-alpha-D-glucose is bound at residue 21-22; that stretch reads GG. Positions 76 and 130 each coordinate D-glucose 6-phosphate. Residues Arg262 and Lys267 each contribute to the UDP-alpha-D-glucose site. Arg300 is a binding site for D-glucose 6-phosphate. Residues Phe339 and 365–369 contribute to the UDP-alpha-D-glucose site; that span reads LVAKE.

The protein belongs to the glycosyltransferase 20 family. In terms of assembly, homotetramer.

It catalyses the reaction D-glucose 6-phosphate + UDP-alpha-D-glucose = alpha,alpha-trehalose 6-phosphate + UDP + H(+). It functions in the pathway glycan biosynthesis; trehalose biosynthesis. In terms of biological role, probably involved in the osmoprotection via the biosynthesis of trehalose. Catalyzes the transfer of glucose from UDP-alpha-D-glucose (UDP-Glc) to D-glucose 6-phosphate (Glc-6-P) to form trehalose-6-phosphate. Acts with retention of the anomeric configuration of the UDP-sugar donor. The protein is Trehalose-6-phosphate synthase of Citrobacter koseri (strain ATCC BAA-895 / CDC 4225-83 / SGSC4696).